Reading from the N-terminus, the 368-residue chain is Xaa-Pro dipeptidase (368 aa).

Mn(2+) contacts are provided by D223, D234, H298, E327, and E341.

The protein belongs to the peptidase M24B family. It depends on Mn(2+) as a cofactor.

It is found in the cytoplasm. It carries out the reaction Xaa-L-Pro dipeptide + H2O = an L-alpha-amino acid + L-proline. This is Xaa-Pro dipeptidase (pepQ) from Lactobacillus helveticus (Lactobacillus suntoryeus).